Reading from the N-terminus, the 86-residue chain is Allergen Api g 5 (86 aa).

Asparagine 62 carries N-linked (GlcNAc...) asparagine glycosylation.

This sequence belongs to the oxygen-dependent FAD-linked oxidoreductase family. The cofactor is FAD. In terms of processing, carries MUXF and MMXF, two complex N-linked glycans with alpha-1,3-fucose and beta-1,2-xylose residues in their structures. MMXF is added to Asn-62.

The protein is Allergen Api g 5 of Apium graveolens (Celery).